We begin with the raw amino-acid sequence, 501 residues long: Probable cytosol aminopeptidase (501 aa).

Lysine 270 and aspartate 275 together coordinate Mn(2+). Residue lysine 282 is part of the active site. The Mn(2+) site is built by aspartate 293, aspartate 352, and glutamate 354. The active site involves arginine 356.

The protein belongs to the peptidase M17 family. Requires Mn(2+) as cofactor.

Its subcellular location is the cytoplasm. The enzyme catalyses Release of an N-terminal amino acid, Xaa-|-Yaa-, in which Xaa is preferably Leu, but may be other amino acids including Pro although not Arg or Lys, and Yaa may be Pro. Amino acid amides and methyl esters are also readily hydrolyzed, but rates on arylamides are exceedingly low.. It carries out the reaction Release of an N-terminal amino acid, preferentially leucine, but not glutamic or aspartic acids.. Its function is as follows. Presumably involved in the processing and regular turnover of intracellular proteins. Catalyzes the removal of unsubstituted N-terminal amino acids from various peptides. This Wigglesworthia glossinidia brevipalpis protein is Probable cytosol aminopeptidase.